The sequence spans 82 residues: Large ribosomal subunit protein bL31B (82 aa).

Belongs to the bacterial ribosomal protein bL31 family. Type B subfamily. In terms of assembly, part of the 50S ribosomal subunit.

In Dichelobacter nodosus (strain VCS1703A), this protein is Large ribosomal subunit protein bL31B.